Reading from the N-terminus, the 330-residue chain is Beta-hexosaminidase (330 aa).

Residues D62, R70, R130, and 160-161 contribute to the substrate site; that span reads KH. Residue H173 is the Proton donor/acceptor of the active site. The Nucleophile role is filled by D242.

The protein belongs to the glycosyl hydrolase 3 family. NagZ subfamily.

It is found in the cytoplasm. It carries out the reaction Hydrolysis of terminal non-reducing N-acetyl-D-hexosamine residues in N-acetyl-beta-D-hexosaminides.. It participates in cell wall biogenesis; peptidoglycan recycling. In terms of biological role, plays a role in peptidoglycan recycling by cleaving the terminal beta-1,4-linked N-acetylglucosamine (GlcNAc) from peptide-linked peptidoglycan fragments, giving rise to free GlcNAc, anhydro-N-acetylmuramic acid and anhydro-N-acetylmuramic acid-linked peptides. The polypeptide is Beta-hexosaminidase (Vibrio cholerae serotype O1 (strain ATCC 39541 / Classical Ogawa 395 / O395)).